The chain runs to 345 residues: Anthranilate phosphoribosyltransferase (345 aa).

5-phospho-alpha-D-ribose 1-diphosphate-binding positions include Gly-84, 87-88, Thr-92, 94-97, 112-120, and Ser-124; these read GD, NIST, and KHGGRSVSS. Position 84 (Gly-84) interacts with anthranilate. Ser-96 is a Mg(2+) binding site. Residue Arg-170 coordinates anthranilate. Residues Asp-229 and Glu-230 each contribute to the Mg(2+) site.

This sequence belongs to the anthranilate phosphoribosyltransferase family. In terms of assembly, homodimer. Mg(2+) is required as a cofactor.

It carries out the reaction N-(5-phospho-beta-D-ribosyl)anthranilate + diphosphate = 5-phospho-alpha-D-ribose 1-diphosphate + anthranilate. It participates in amino-acid biosynthesis; L-tryptophan biosynthesis; L-tryptophan from chorismate: step 2/5. Its function is as follows. Catalyzes the transfer of the phosphoribosyl group of 5-phosphorylribose-1-pyrophosphate (PRPP) to anthranilate to yield N-(5'-phosphoribosyl)-anthranilate (PRA). The sequence is that of Anthranilate phosphoribosyltransferase from Herminiimonas arsenicoxydans.